The chain runs to 119 residues: Methylglyoxal synthase (119 aa).

Positions Met-1–Phe-119 constitute an MGS-like domain. Substrate contacts are provided by residues His-8, Lys-12, Thr-34–Thr-37, and Ser-54–Gly-55. Asp-60 acts as the Proton donor/acceptor in catalysis. Substrate is bound at residue His-87.

It belongs to the methylglyoxal synthase family.

It catalyses the reaction dihydroxyacetone phosphate = methylglyoxal + phosphate. Functionally, catalyzes the formation of methylglyoxal from dihydroxyacetone phosphate. The sequence is that of Methylglyoxal synthase from Clostridium beijerinckii (strain ATCC 51743 / NCIMB 8052) (Clostridium acetobutylicum).